The primary structure comprises 171 residues: MDAVSWAPGRPSHPDTPPNIYEGGLGAQQQQGPSAQGSKPKNFRLRHLRSLALYLPGHMQPAGQCGSHWLGRLMAGGSLTRPEGSPWPLDLPQGTLGPGNSHCSALLEAHLPRDSLGNTASSSSMDPAKGVPSQSGPPEGLGLRPKRSWRALEETMCPLCKRTRSGALERT.

2 disordered regions span residues 1 to 41 and 114 to 147; these read MDAV…SKPK and DSLG…RPKR. Residues 27–38 are compositionally biased toward low complexity; that stretch reads AQQQQGPSAQGS. The segment covering 116-125 has biased composition (polar residues); it reads LGNTASSSSM.

This is an uncharacterized protein from Mus musculus (Mouse).